We begin with the raw amino-acid sequence, 536 residues long: G-protein coupled receptor Mth2 (536 aa).

Over 1 to 210 (MAERDHYHTI…DDNSTVKIIN (210 aa)) the chain is Extracellular. 5 disulfide bridges follow: C17/C71, C73/C78, C82/C177, C83/C96, and C138/C197. 2 N-linked (GlcNAc...) asparagine glycosylation sites follow: N24 and N33. N-linked (GlcNAc...) asparagine glycans are attached at residues N103, N113, N118, N159, N184, and N203. The chain crosses the membrane as a helical span at residues 211–231 (AYAMMFSIPFMMLTIAVYLLI). The Cytoplasmic segment spans residues 232–241 (PELRNQHGKS). A helical membrane pass occupies residues 242–262 (LVCYLVGLTVGYTSLCYVQLY). Residues 263–273 (QVDATGDACKV) are Extracellular-facing. Residues 274 to 294 (FGYTAYFFFMGAYMWLSVISF) form a helical membrane-spanning segment. Over 295 to 314 (DLWHNFRGTRGINRFQEKKR) the chain is Cytoplasmic. Residues 315 to 335 (FLFYSLYSWGIAVVFLAFTYI) form a helical membrane-spanning segment. Residues 336 to 365 (AQELTNLPAYLKPGIGDGVYCWLDMSNWAA) lie on the Extracellular side of the membrane. A helical membrane pass occupies residues 366–386 (MIYFYGPILVIVVANTIMFIM). The Cytoplasmic portion of the chain corresponds to 387-417 (TAIKIHGVQREMARIIASENSTKNLRTEKDK). The chain crosses the membrane as a helical span at residues 418-438 (FGLFLRLFLIMGITWLTELIS). Residues 439–449 (YFVGSDKGWSK) lie on the Extracellular side of the membrane. A helical membrane pass occupies residues 450–470 (LFYISDLANAMQGFLIFMLFV). Over 471–536 (MKKKVKHLIT…VDPQKTTIFR (66 aa)) the chain is Cytoplasmic. The interval 487–506 (RDGSNQRQSQYSTKTTSSSV) is disordered. Residues 492 to 505 (QRQSQYSTKTTSSS) show a composition bias toward low complexity.

It belongs to the G-protein coupled receptor 2 family. Mth subfamily. As to quaternary structure, homodimer.

It localises to the cell membrane. Involved in biological aging and stress response. Essential for adult survival. This chain is G-protein coupled receptor Mth2 (mth2), found in Drosophila yakuba (Fruit fly).